Reading from the N-terminus, the 256-residue chain is Trans-aconitate 2-methyltransferase (256 aa).

It belongs to the methyltransferase superfamily. Tam family.

Its subcellular location is the cytoplasm. It catalyses the reaction trans-aconitate + S-adenosyl-L-methionine = (E)-3-(methoxycarbonyl)pent-2-enedioate + S-adenosyl-L-homocysteine. Catalyzes the S-adenosylmethionine monomethyl esterification of trans-aconitate. The protein is Trans-aconitate 2-methyltransferase of Rhodopseudomonas palustris (strain BisA53).